Consider the following 251-residue polypeptide: Gamma-glutamyl peptidase 4 (251 aa).

The Glutamine amidotransferase type-1 domain occupies 16–213 (SEFAKKTYGG…IDRVLAGGHI (198 aa)). The active-site Nucleophile is Cys-100. Residues His-192 and Glu-194 contribute to the active site.

The protein belongs to the peptidase C26 family.

It is found in the cytoplasm. It localises to the cytosol. It participates in secondary metabolite biosynthesis. In terms of biological role, involved in glucosinolate biosynthesis. Hydrolyzes the gamma-glutamyl peptide bond of several glutathione (GSH) conjugates to produce Cys-Gly conjugates related to glucosinolates. The gamma-Glu-Cys-Gly-GSH conjugates are the sulfur-donating molecule in glucosinolate biosynthesis. This chain is Gamma-glutamyl peptidase 4, found in Arabidopsis thaliana (Mouse-ear cress).